Consider the following 257-residue polypeptide: Beta-fibrinogenase mucrofibrase-5 (257 aa).

The signal sequence occupies residues Met-1–Ala-18. Positions Gln-19–Leu-24 are excised as a propeptide. The 224-residue stretch at Ile-25 to Ala-248 folds into the Peptidase S1 domain. 6 disulfides stabilise this stretch: Cys-31–Cys-162, Cys-49–Cys-65, Cys-97–Cys-255, Cys-141–Cys-209, Cys-173–Cys-188, and Cys-199–Cys-224. The Charge relay system role is filled by His-64. The N-linked (GlcNAc...) asparagine glycan is linked to Asn-102. Asp-109 functions as the Charge relay system in the catalytic mechanism. The active-site Charge relay system is the Ser-203.

It belongs to the peptidase S1 family. Snake venom subfamily. As to quaternary structure, monomer. As to expression, expressed by the venom gland.

It is found in the secreted. Functionally, snake venom serine protease with strong beta-fibrinogenolytic activities, angiotensin I (AGT)-degrading activities and strong kallikrein-like activities in vitro, releasing bradykinin from kininogen (KNG1). Intravenous injection mildly lowers blood pressure in experimental rats, which may be explained by the action on angiotensin I and kininogen. Exhibits amidase activity against N-benzoyl-Pro-Phe-Arg-p-nitroanilide in vitro. The chain is Beta-fibrinogenase mucrofibrase-5 from Protobothrops mucrosquamatus (Taiwan habu).